The primary structure comprises 147 residues: Mineralocorticoid receptor (147 aa).

The NR LBD domain occupies phenylalanine 1 to alanine 147. 21-hydroxyprogesterone-binding residues include arginine 6 and threonine 134. Aldosterone is bound by residues arginine 6 and threonine 134. Progesterone-binding residues include arginine 6 and threonine 134.

This sequence belongs to the nuclear hormone receptor family. NR3 subfamily.

Its subcellular location is the cytoplasm. The protein localises to the nucleus. Receptor for both mineralocorticoids (MC) such as aldosterone and glucocorticoids (GC) such as corticosterone or cortisol. Binds to mineralocorticoid response elements (MRE) and transactivates target genes. The effect of MC is to increase ion and water transport and thus raise extracellular fluid volume and blood pressure and lower potassium levels. This is Mineralocorticoid receptor (NR3C2) from Gallus gallus (Chicken).